The sequence spans 308 residues: D-alanine--D-alanine ligase (308 aa).

The ATP-grasp domain occupies K104 to E304. L131 to T187 contributes to the ATP binding site. The Mg(2+) site is built by D255, E271, and N273.

Belongs to the D-alanine--D-alanine ligase family. Mg(2+) serves as cofactor. Requires Mn(2+) as cofactor.

The protein resides in the cytoplasm. It carries out the reaction 2 D-alanine + ATP = D-alanyl-D-alanine + ADP + phosphate + H(+). Its pathway is cell wall biogenesis; peptidoglycan biosynthesis. Functionally, cell wall formation. The polypeptide is D-alanine--D-alanine ligase (Sphingopyxis alaskensis (strain DSM 13593 / LMG 18877 / RB2256) (Sphingomonas alaskensis)).